Reading from the N-terminus, the 475-residue chain is Aspartyl/glutamyl-tRNA(Asn/Gln) amidotransferase subunit B (475 aa).

It belongs to the GatB/GatE family. GatB subfamily. Heterotrimer of A, B and C subunits.

It catalyses the reaction L-glutamyl-tRNA(Gln) + L-glutamine + ATP + H2O = L-glutaminyl-tRNA(Gln) + L-glutamate + ADP + phosphate + H(+). It carries out the reaction L-aspartyl-tRNA(Asn) + L-glutamine + ATP + H2O = L-asparaginyl-tRNA(Asn) + L-glutamate + ADP + phosphate + 2 H(+). In terms of biological role, allows the formation of correctly charged Asn-tRNA(Asn) or Gln-tRNA(Gln) through the transamidation of misacylated Asp-tRNA(Asn) or Glu-tRNA(Gln) in organisms which lack either or both of asparaginyl-tRNA or glutaminyl-tRNA synthetases. The reaction takes place in the presence of glutamine and ATP through an activated phospho-Asp-tRNA(Asn) or phospho-Glu-tRNA(Gln). This chain is Aspartyl/glutamyl-tRNA(Asn/Gln) amidotransferase subunit B, found in Staphylococcus haemolyticus (strain JCSC1435).